The sequence spans 357 residues: MKAAIAQINTAALRHNLAVVKRHAPQCKIIAVVKANAYGHGLLPVARTLVDADAYAVARIEEALMLRSCAVVKPIVLLEGFFSAADLPVLAANNLQTAVHTWEQLEALEQADLPAPVVAWLKLDTGMHRLGVRADEMPAFIERLAKCKNVVQPFNIMTHFSRSDELEQPTTREQIDLFSQLTAPLLGERAMANSAGILAWPDSHCDWVRPGVILYGVSPFPNTVAADYDLQPVMTLKTQLIAVRDHKAGEPVGYGANWVSDRDTRLGVIAIGYGDGYPRMAPNGTPVLVNGRIVPLVGRVSMDMTTVDLGPGATDKAGDEAVLWGEGLPVERVADQIGTIPYELITKLTSRVFMEYV.

The active-site Proton acceptor; specific for D-alanine is lysine 34. Position 34 is an N6-(pyridoxal phosphate)lysine (lysine 34). A substrate-binding site is contributed by arginine 129. Tyrosine 254 acts as the Proton acceptor; specific for L-alanine in catalysis. Methionine 302 contacts substrate.

Belongs to the alanine racemase family. The cofactor is pyridoxal 5'-phosphate.

The catalysed reaction is L-alanine = D-alanine. It functions in the pathway amino-acid biosynthesis; D-alanine biosynthesis; D-alanine from L-alanine: step 1/1. Catalyzes the interconversion of L-alanine and D-alanine. Likely plays an important role in supplying D-alanine, which is an indispensable constituent in the biosynthesis of bacterial cell-wall peptidoglycan. In Aeromonas hydrophila subsp. hydrophila (strain ATCC 7966 / DSM 30187 / BCRC 13018 / CCUG 14551 / JCM 1027 / KCTC 2358 / NCIMB 9240 / NCTC 8049), this protein is Alanine racemase.